The following is a 145-amino-acid chain: uncharacterized protein (145 aa).

An N-terminal signal peptide occupies residues 1–23; that stretch reads MSSSNLSSRKTRISAHFLDAAPA. The chain crosses the membrane as a helical span at residues 123-140; sequence VLLLIIALVFLLFVAIFI.

The protein localises to the membrane. This is an uncharacterized protein from Archaeoglobus fulgidus (strain ATCC 49558 / DSM 4304 / JCM 9628 / NBRC 100126 / VC-16).